The sequence spans 82 residues: Large ribosomal subunit protein uL23 (82 aa).

This sequence belongs to the universal ribosomal protein uL23 family. Part of the 50S ribosomal subunit. Contacts protein L29.

Its function is as follows. Binds to 23S rRNA. One of the proteins that surrounds the polypeptide exit tunnel on the outside of the ribosome. This is Large ribosomal subunit protein uL23 from Methanosarcina acetivorans (strain ATCC 35395 / DSM 2834 / JCM 12185 / C2A).